The primary structure comprises 347 residues: Selenide, water dikinase (347 aa).

Cysteine 17 is a catalytic residue. ATP-binding positions include lysine 20 and 48–50 (TRD). Mg(2+) is bound at residue aspartate 51. ATP is bound by residues aspartate 68, aspartate 91, and 139-141 (GHS). Residue aspartate 91 coordinates Mg(2+). Aspartate 227 is a Mg(2+) binding site.

Belongs to the selenophosphate synthase 1 family. Class I subfamily. In terms of assembly, homodimer. Mg(2+) is required as a cofactor.

The catalysed reaction is hydrogenselenide + ATP + H2O = selenophosphate + AMP + phosphate + 2 H(+). Its function is as follows. Synthesizes selenophosphate from selenide and ATP. This Salmonella typhimurium (strain LT2 / SGSC1412 / ATCC 700720) protein is Selenide, water dikinase.